Consider the following 166-residue polypeptide: ATP synthase subunit b (166 aa).

The chain crosses the membrane as a helical span at residues 15–37 (TLYYLLIFAALLLLVKHFAWGPV).

It belongs to the ATPase B chain family. In terms of assembly, F-type ATPases have 2 components, F(1) - the catalytic core - and F(0) - the membrane proton channel. F(1) has five subunits: alpha(3), beta(3), gamma(1), delta(1), epsilon(1). F(0) has three main subunits: a(1), b(2) and c(10-14). The alpha and beta chains form an alternating ring which encloses part of the gamma chain. F(1) is attached to F(0) by a central stalk formed by the gamma and epsilon chains, while a peripheral stalk is formed by the delta and b chains.

The protein localises to the cell membrane. Functionally, f(1)F(0) ATP synthase produces ATP from ADP in the presence of a proton or sodium gradient. F-type ATPases consist of two structural domains, F(1) containing the extramembraneous catalytic core and F(0) containing the membrane proton channel, linked together by a central stalk and a peripheral stalk. During catalysis, ATP synthesis in the catalytic domain of F(1) is coupled via a rotary mechanism of the central stalk subunits to proton translocation. Component of the F(0) channel, it forms part of the peripheral stalk, linking F(1) to F(0). In Lactobacillus johnsonii (strain CNCM I-12250 / La1 / NCC 533), this protein is ATP synthase subunit b.